Reading from the N-terminus, the 367-residue chain is Uptake hydrogenase small subunit (367 aa).

The tat-type signal signal peptide spans 1–45 (MTPTETFYEVMRRQGVTRRSFLKFCSLTATALGLGPAYTSEIAHA). 8 residues coordinate [4Fe-4S] cluster: C62, C65, C160, C194, H232, C235, C260, and C266. 3 residues coordinate [3Fe-4S] cluster: C275, C294, and C297.

It belongs to the [NiFe]/[NiFeSe] hydrogenase small subunit family. In terms of assembly, heterodimer of a large and a small subunit. [4Fe-4S] cluster is required as a cofactor. [3Fe-4S] cluster serves as cofactor. Predicted to be exported by the Tat system. The position of the signal peptide cleavage has been experimentally proven.

The protein localises to the cell membrane. It carries out the reaction H2 + A = AH2. In terms of biological role, this enzyme recycles the H(2) produced by nitrogenase to increase the production of ATP and to protect nitrogenase against inhibition or damage by O(2) under carbon- or phosphate-limited conditions. The chain is Uptake hydrogenase small subunit (hoxS) from Afipia carboxidovorans (strain ATCC 49405 / DSM 1227 / KCTC 32145 / OM5) (Oligotropha carboxidovorans).